Consider the following 671-residue polypeptide: DNA ligase (671 aa).

NAD(+) is bound by residues D32–D36, S81–L82, and E113. The active-site N6-AMP-lysine intermediate is the K115. 4 residues coordinate NAD(+): R136, E173, K290, and K314. C408, C411, C426, and C432 together coordinate Zn(2+). The region spanning E593–A671 is the BRCT domain.

The protein belongs to the NAD-dependent DNA ligase family. LigA subfamily. Requires Mg(2+) as cofactor. It depends on Mn(2+) as a cofactor.

It catalyses the reaction NAD(+) + (deoxyribonucleotide)n-3'-hydroxyl + 5'-phospho-(deoxyribonucleotide)m = (deoxyribonucleotide)n+m + AMP + beta-nicotinamide D-nucleotide.. DNA ligase that catalyzes the formation of phosphodiester linkages between 5'-phosphoryl and 3'-hydroxyl groups in double-stranded DNA using NAD as a coenzyme and as the energy source for the reaction. It is essential for DNA replication and repair of damaged DNA. This chain is DNA ligase, found in Salmonella paratyphi C (strain RKS4594).